Reading from the N-terminus, the 92-residue chain is Alpha-hemoglobin-stabilizing protein (92 aa).

This sequence belongs to the AHSP family. As to quaternary structure, monomer. Forms a heterodimer with free alpha-hemoglobin. Does not bind beta-hemoglobin nor alpha(2)beta(2) hemoglobin A.

It is found in the cytoplasm. Its function is as follows. Acts as a chaperone to prevent the harmful aggregation of alpha-hemoglobin during normal erythroid cell development. Specifically protects free alpha-hemoglobin from precipitation. In Bos taurus (Bovine), this protein is Alpha-hemoglobin-stabilizing protein (AHSP).